A 168-amino-acid chain; its full sequence is Peptide deformylase (168 aa).

Fe cation is bound by residues cysteine 92 and histidine 134. Glutamate 135 is an active-site residue. Position 138 (histidine 138) interacts with Fe cation.

The protein belongs to the polypeptide deformylase family. Fe(2+) serves as cofactor.

It catalyses the reaction N-terminal N-formyl-L-methionyl-[peptide] + H2O = N-terminal L-methionyl-[peptide] + formate. Functionally, removes the formyl group from the N-terminal Met of newly synthesized proteins. Requires at least a dipeptide for an efficient rate of reaction. N-terminal L-methionine is a prerequisite for activity but the enzyme has broad specificity at other positions. The chain is Peptide deformylase from Hahella chejuensis (strain KCTC 2396).